Consider the following 43-residue polypeptide: Protein PsbN (43 aa).

The helical transmembrane segment at 5-27 (TLVAIFISGSLVSFTGYALYTAF) threads the bilayer.

Belongs to the PsbN family.

It localises to the plastid. The protein resides in the chloroplast thylakoid membrane. May play a role in photosystem I and II biogenesis. The chain is Protein PsbN from Nelumbo lutea (American lotus).